A 169-amino-acid chain; its full sequence is E1B protein, small T-antigen (169 aa).

The interval 147 to 169 (GSVVEEEQGEEHLARDSDDPFFD) is disordered. Residues 156–169 (EEHLARDSDDPFFD) show a composition bias toward basic and acidic residues.

It belongs to the adenoviridae E1B 19 kDa protein family.

The polypeptide is E1B protein, small T-antigen (Canine adenovirus serotype 1 (strain Glaxo) (CAdV-1)).